The primary structure comprises 336 residues: Aspartate--ammonia ligase (336 aa).

It belongs to the class-II aminoacyl-tRNA synthetase family. AsnA subfamily.

It localises to the cytoplasm. The enzyme catalyses L-aspartate + NH4(+) + ATP = L-asparagine + AMP + diphosphate + H(+). The protein operates within amino-acid biosynthesis; L-asparagine biosynthesis; L-asparagine from L-aspartate (ammonia route): step 1/1. This chain is Aspartate--ammonia ligase, found in Clostridium perfringens (strain SM101 / Type A).